A 399-amino-acid polypeptide reads, in one-letter code: Leu/Ile/Val-binding protein homolog 7 (399 aa).

Positions 1 to 22 (MEKHLIALSVAALLAGAAPASA) are cleaved as a signal peptide.

This sequence belongs to the leucine-binding protein family.

Its function is as follows. Component of an amino-acid transport system. In Brucella melitensis biotype 1 (strain ATCC 23456 / CCUG 17765 / NCTC 10094 / 16M), this protein is Leu/Ile/Val-binding protein homolog 7.